The sequence spans 123 residues: Thioredoxin domain-containing protein 17 (123 aa).

Residues 41 to 123 (SWCPDCVKAE…DLVRMMFTED (83 aa)) enclose the Thioredoxin domain. Active-site nucleophile residues include Cys43 and Cys46. Residues Cys43 and Cys46 are joined by a disulfide bond.

Belongs to the thioredoxin family.

The protein resides in the cytoplasm. Functionally, disulfide reductase. May participate in various redox reactions through the reversible oxidation of its active center dithiol to a disulfide and catalyze dithiol-disulfide exchange reactions. Has peroxidase activity and may contribute to the elimination of cellular hydrogen peroxide. The protein is Thioredoxin domain-containing protein 17 (txndc17) of Danio rerio (Zebrafish).